A 431-amino-acid polypeptide reads, in one-letter code: Histidinol dehydrogenase (431 aa).

3 residues coordinate NAD(+): Y127, Q185, and N208. The substrate site is built by S234, Q256, and H259. Q256 and H259 together coordinate Zn(2+). Residues E323 and H324 each act as proton acceptor in the active site. H324, D357, E411, and H416 together coordinate substrate. D357 is a binding site for Zn(2+). H416 lines the Zn(2+) pocket.

The protein belongs to the histidinol dehydrogenase family. Requires Zn(2+) as cofactor.

The enzyme catalyses L-histidinol + 2 NAD(+) + H2O = L-histidine + 2 NADH + 3 H(+). The protein operates within amino-acid biosynthesis; L-histidine biosynthesis; L-histidine from 5-phospho-alpha-D-ribose 1-diphosphate: step 9/9. In terms of biological role, catalyzes the sequential NAD-dependent oxidations of L-histidinol to L-histidinaldehyde and then to L-histidine. In Vibrio cholerae serotype O1 (strain ATCC 39315 / El Tor Inaba N16961), this protein is Histidinol dehydrogenase.